The sequence spans 466 residues: 3-isopropylmalate dehydratase large subunit (466 aa).

Residues cysteine 345, cysteine 405, and cysteine 408 each contribute to the [4Fe-4S] cluster site.

This sequence belongs to the aconitase/IPM isomerase family. LeuC type 1 subfamily. As to quaternary structure, heterodimer of LeuC and LeuD. It depends on [4Fe-4S] cluster as a cofactor.

The catalysed reaction is (2R,3S)-3-isopropylmalate = (2S)-2-isopropylmalate. Its pathway is amino-acid biosynthesis; L-leucine biosynthesis; L-leucine from 3-methyl-2-oxobutanoate: step 2/4. In terms of biological role, catalyzes the isomerization between 2-isopropylmalate and 3-isopropylmalate, via the formation of 2-isopropylmaleate. The polypeptide is 3-isopropylmalate dehydratase large subunit (Microcystis aeruginosa (strain NIES-843 / IAM M-2473)).